Consider the following 528-residue polypeptide: MIIAFFLLIQCVYCVIWPPLSVDNEVALRSQRDVSYNVSVDQLVDVGVRLSTVIFERDTYTQPYLNRVDNLLNASVGNILIDAYWDEGGFNWQLCPAPFSANVTPIADGSTILQLEWDNKQYTCDRRLDLASIFTRIDEHIRASARSVSLNLITIYMSLHSIGTQNPTPVSQPGTLSRPLVRSIDQVQILTPASLRVAQLSNSTYQGLEFDPNGYPILGELLQSRGIRVIPIILENNMYEDTSYELERDSNLYFIQNSTIDVTQTNTADTKLTDLTTNITNWTIADSQALLSESFRLVMETEEDPFSLESYTNHISHGYSPFLNRKYNESEIRQFAVNRLWSWKNSYLPEVSVPLLGDQDDSNSANETLQCASFSNLSWIISSCDEPRQVACRNSSYWLQWTVTSTLSNYYGATEACPVGTFFDIPRTPLDSMTLQREIPLNSSVWIDLNTLDSGGCWISGGAEAECPYHRVTLVSLYVEILTPSSVVSIVLIAIVVLLHFVRIPIQKNRKYWRKLQDNIKDSDGIPS.

Residues 1–14 (MIIAFFLLIQCVYC) form the signal peptide. Residues 15–480 (VIWPPLSVDN…RVTLVSLYVE (466 aa)) are Extracellular-facing. N-linked (GlcNAc...) asparagine glycosylation is found at Asn37, Asn73, Asn202, Asn257, Asn278, Asn281, Asn328, Asn366, Asn376, Asn394, and Asn442. The chain crosses the membrane as a helical span at residues 481–501 (ILTPSSVVSIVLIAIVVLLHF). Residues 502 to 528 (VRIPIQKNRKYWRKLQDNIKDSDGIPS) lie on the Cytoplasmic side of the membrane.

This sequence belongs to the MTC6 family.

The protein resides in the membrane. Functionally, may be involved in telomere capping. This chain is Maintenance of telomere capping protein 6 (MTC6), found in Komagataella phaffii (strain GS115 / ATCC 20864) (Yeast).